A 151-amino-acid polypeptide reads, in one-letter code: Deoxyuridine 5'-triphosphate nucleotidohydrolase (151 aa).

Substrate-binding positions include 70 to 72 (RSG), Asn83, 87 to 89 (LID), and Met97.

Belongs to the dUTPase family. Homotrimer. Requires Mg(2+) as cofactor.

It catalyses the reaction dUTP + H2O = dUMP + diphosphate + H(+). It participates in pyrimidine metabolism; dUMP biosynthesis; dUMP from dCTP (dUTP route): step 2/2. Functionally, this enzyme is involved in nucleotide metabolism: it produces dUMP, the immediate precursor of thymidine nucleotides and it decreases the intracellular concentration of dUTP so that uracil cannot be incorporated into DNA. The chain is Deoxyuridine 5'-triphosphate nucleotidohydrolase from Escherichia coli O45:K1 (strain S88 / ExPEC).